Reading from the N-terminus, the 451-residue chain is Exodeoxyribonuclease 7 large subunit (451 aa).

The protein belongs to the XseA family. As to quaternary structure, heterooligomer composed of large and small subunits.

It is found in the cytoplasm. It carries out the reaction Exonucleolytic cleavage in either 5'- to 3'- or 3'- to 5'-direction to yield nucleoside 5'-phosphates.. Its function is as follows. Bidirectionally degrades single-stranded DNA into large acid-insoluble oligonucleotides, which are then degraded further into small acid-soluble oligonucleotides. This Neisseria meningitidis serogroup B (strain ATCC BAA-335 / MC58) protein is Exodeoxyribonuclease 7 large subunit.